Consider the following 53-residue polypeptide: Small, acid-soluble spore protein K (53 aa).

The segment at 1–53 (MRNKAHNFPNQNNNKLEGEPRAKAEYASKRADGTTNTHPQERMRASGERSDFF) is disordered. 2 stretches are compositionally biased toward basic and acidic residues: residues 16-32 (LEGE…KRAD) and 39-53 (PQER…SDFF).

Belongs to the SspK family.

The protein resides in the spore core. The protein is Small, acid-soluble spore protein K of Geobacillus kaustophilus (strain HTA426).